A 350-amino-acid polypeptide reads, in one-letter code: Phosphotriesterase-related protein (350 aa).

A divalent metal cation is bound by residues His-22, His-24, Glu-169, His-201, His-230, and Asp-298.

Belongs to the metallo-dependent hydrolases superfamily. Phosphotriesterase family. The cofactor is a divalent metal cation.

The chain is Phosphotriesterase-related protein from Drosophila erecta (Fruit fly).